We begin with the raw amino-acid sequence, 427 residues long: Ribosome biogenesis protein WDR12 homolog (427 aa).

The tract at residues 13-97 is ubiquitin-like (UBL) domain; that stretch reads LQLHLYTKQK…EDTVELEYVE (85 aa). WD repeat units lie at residues 109 to 146, 148 to 190, 197 to 236, 260 to 298, 301 to 339, 345 to 385, and 389 to 427; these read LHDDWVSAVEAKDNWILTGCYDNTLNIWTTKGKHKLTI, GHIA…NSVE, GHERGVDCIAANRSKTRMATGSWDTMLKIWSTDVRNDGDS, GHRECISGVQWIDDNTLVTSSWDHTIKIWDLALSGIKSE, GHKSFFDLSYSHLNGLIIAASPDKNLRLYDPKSNQGTIV, GHTQ…APIF, and GHEDKVLACDWSNPKFILSGGSDNSVRVFKSKIAIGEQK.

It belongs to the WD repeat WDR12/YTM1 family.

Its subcellular location is the nucleus. It is found in the nucleolus. The protein resides in the nucleoplasm. Functionally, required for maturation of ribosomal RNAs and formation of the large ribosomal subunit. The sequence is that of Ribosome biogenesis protein WDR12 homolog from Aedes aegypti (Yellowfever mosquito).